The primary structure comprises 146 residues: UPF0178 protein Lin1493 (146 aa).

The protein belongs to the UPF0178 family.

The sequence is that of UPF0178 protein Lin1493 from Listeria innocua serovar 6a (strain ATCC BAA-680 / CLIP 11262).